The following is a 244-amino-acid chain: Small ribosomal subunit protein uS3 (244 aa).

Residues 39 to 107 (MRKFVMSELK…ETHLNIVEVR (69 aa)) enclose the KH type-2 domain. A disordered region spans residues 214-244 (ASERRALEGDAQGPASRERDRGDRRRERDNA). Over residues 229–244 (SRERDRGDRRRERDNA) the composition is skewed to basic and acidic residues.

This sequence belongs to the universal ribosomal protein uS3 family. As to quaternary structure, part of the 30S ribosomal subunit. Forms a tight complex with proteins S10 and S14.

Functionally, binds the lower part of the 30S subunit head. Binds mRNA in the 70S ribosome, positioning it for translation. The sequence is that of Small ribosomal subunit protein uS3 from Rhizobium etli (strain CIAT 652).